The sequence spans 489 residues: Argininosuccinate lyase (489 aa).

The disordered stretch occupies residues 462 to 489 (QARYQQTEPAEEPPLPPSSPGSGLPLES).

Belongs to the lyase 1 family. Argininosuccinate lyase subfamily.

It localises to the cytoplasm. It catalyses the reaction 2-(N(omega)-L-arginino)succinate = fumarate + L-arginine. Its pathway is amino-acid biosynthesis; L-arginine biosynthesis; L-arginine from L-ornithine and carbamoyl phosphate: step 3/3. The protein is Argininosuccinate lyase of Synechococcus sp. (strain JA-3-3Ab) (Cyanobacteria bacterium Yellowstone A-Prime).